The chain runs to 156 residues: Cyanate hydratase (156 aa).

Residues arginine 96, glutamate 99, and serine 122 contribute to the active site.

It belongs to the cyanase family.

It carries out the reaction cyanate + hydrogencarbonate + 3 H(+) = NH4(+) + 2 CO2. Its function is as follows. Catalyzes the reaction of cyanate with bicarbonate to produce ammonia and carbon dioxide. This is Cyanate hydratase from Burkholderia mallei (strain NCTC 10247).